Consider the following 617-residue polypeptide: Probable LRR receptor-like serine/threonine-protein kinase RKF3 (617 aa).

An N-terminal signal peptide occupies residues 1–20 (MLFLRRIAVVFFVFTSFSAA). The Extracellular portion of the chain corresponds to 21-212 (QNSTCPLDFS…PTSSGANKVK (192 aa)). 4 N-linked (GlcNAc...) asparagine glycosylation sites follow: N22, N124, N135, and N165. A helical transmembrane segment spans residues 213–233 (VLVSSFSVLLVASVLVITAWF). Residues 234–617 (WYCRRKKSKL…DGPSGNTNTT (384 aa)) are Cytoplasmic-facing. The Protein kinase domain occupies 283-563 (FSRHNIIGRG…VKMLESNEFT (281 aa)). ATP contacts are provided by residues 289-297 (IGRGGYGNV) and K311. D412 functions as the Proton acceptor in the catalytic mechanism. The tract at residues 585–617 (VSSSSGSGKLTSPTGYQAFSFGGDGPSGNTNTT) is disordered.

This sequence belongs to the protein kinase superfamily. Ser/Thr protein kinase family. In terms of tissue distribution, expressed in the whole plant at low levels.

It localises to the cell membrane. It carries out the reaction L-seryl-[protein] + ATP = O-phospho-L-seryl-[protein] + ADP + H(+). It catalyses the reaction L-threonyl-[protein] + ATP = O-phospho-L-threonyl-[protein] + ADP + H(+). The protein is Probable LRR receptor-like serine/threonine-protein kinase RKF3 (RKF3) of Arabidopsis thaliana (Mouse-ear cress).